The following is a 65-amino-acid chain: Large ribosomal subunit protein bL35 (65 aa).

The interval 1–25 is disordered; sequence MPKLKTKSSAAKRFKKTGKGGFKHR.

The protein belongs to the bacterial ribosomal protein bL35 family.

The sequence is that of Large ribosomal subunit protein bL35 from Francisella tularensis subsp. holarctica (strain FTNF002-00 / FTA).